The chain runs to 295 residues: MVLPDIKKGKDMINILPFEIISRNTKTLLITYISSVDITHEGMKKVLESLRSKQGIISEYLLDKLLDESLIDKDKGKEFLITTGVINKTKTSPLWVNSVIISDVPHLFSNAREQWKCDGVFVSHIIDIKDNNINVSDSTLIWLHLENYHSDIVKRIYSKFESNPGVAFIQSYYLKESFRIDGVYSPDLGTPCHFCHIERWLSREEKSFRRNEMSWANLLQLLKKYQMTLPALALGESERGFSYHLIKRRLQELTGTSLVKSHVDNFMSSVSADLITCILCKEPVIHWQACSCLER.

The protein resides in the cytoplasm. Necessary to process the inactive microcin B17 (McbA) precursor into the active peptide. This Escherichia coli protein is Microcin B17-processing protein McbB (mcbB).